A 278-amino-acid polypeptide reads, in one-letter code: Large ribosomal subunit protein uL2 (278 aa).

3 disordered regions span residues 1 to 20 (MAIR…SVSD), 25 to 57 (TRST…RGGG), and 224 to 278 (VVMN…GKKR). 2 stretches are compositionally biased toward basic residues: residues 45 to 57 (AHGR…RGGG) and 269 to 278 (VRRRKTGKKR).

This sequence belongs to the universal ribosomal protein uL2 family. As to quaternary structure, part of the 50S ribosomal subunit. Forms a bridge to the 30S subunit in the 70S ribosome.

In terms of biological role, one of the primary rRNA binding proteins. Required for association of the 30S and 50S subunits to form the 70S ribosome, for tRNA binding and peptide bond formation. It has been suggested to have peptidyltransferase activity; this is somewhat controversial. Makes several contacts with the 16S rRNA in the 70S ribosome. This Nocardia farcinica (strain IFM 10152) protein is Large ribosomal subunit protein uL2.